A 226-amino-acid chain; its full sequence is PKHD-type hydroxylase Bind_0236 (226 aa).

In terms of domain architecture, Fe2OG dioxygenase spans 78–178 (TIFPPLFNRY…RIASFFWIQS (101 aa)). Fe cation contacts are provided by His96, Asp98, and His159. Arg169 contributes to the 2-oxoglutarate binding site.

It depends on Fe(2+) as a cofactor. L-ascorbate is required as a cofactor.

In Beijerinckia indica subsp. indica (strain ATCC 9039 / DSM 1715 / NCIMB 8712), this protein is PKHD-type hydroxylase Bind_0236.